We begin with the raw amino-acid sequence, 433 residues long: F-box/kelch-repeat protein At1g24800 (433 aa).

An F-box domain is found at 23 to 71; it reads TSMCDLPPKLVGEKILTRIPITSLRAVRSTCKLWNALTKDRVLGKAAAQ. 2 Kelch repeats span residues 170–216 and 286–337; these read HKIL…LYGV and VLYH…RFDN.

The chain is F-box/kelch-repeat protein At1g24800 from Arabidopsis thaliana (Mouse-ear cress).